The following is a 317-amino-acid chain: MQPRLGGPALLLLPPLLLLLLLGAGGGDCGARAEVLFRCPPCTPESLAACKPPPGAAAGPAGDARVPCELVREPGCGCCSVCARLEGERCGVYTPRCGQGLRCYPNPGSELPLRALVHGEGTCEKHGDAEYSASPEQVADNGEEHSEGGQVENHVDGNVNLMGGGGGAGRKPLKFRMKELAVFREKVTEQHRQMGKGGKHHLGLEEPKKLRPPPARTPCQQELDQVLERISTMRLPDERGPLEHLYSLHIPNCDKHGLYNLKQCKMSLNGQRGECWCVNPNTGKLIQGAPTIRGDPECHLFYNEQQGARGVHTQRMQ.

Residues Met1 to Ala33 form the signal peptide. The IGFBP N-terminal domain maps to Val35–His126. 6 disulfide bridges follow: Cys39/Cys76, Cys42/Cys78, Cys50/Cys79, Cys68/Cys82, Cys90/Cys103, and Cys97/Cys123. Disordered stretches follow at residues Lys125–Val151 and Glu189–Pro218. The 83-residue stretch at Arg216–Cys298 folds into the Thyroglobulin type-1 domain. 3 disulfide bridges follow: Cys219-Cys253, Cys264-Cys275, and Cys277-Cys298. A Cell attachment site motif is present at residues Arg293–Asp295.

As to quaternary structure, interacts with IGF1. Interacts with IGF2. Interacts (via RGD motif) with integrin alpha5/ITGA5; this interaction induces cell migration, adhesion or apoptosis according to the context. Interacts with PTPRB; this interaction leads to PTPRB dimerization and inactivation. Post-translationally, cleaved by MMP9 leading to release of free IGF2 from IGFBP2-IGF2 complex, which contributes to enhance the motility and the growth of astrocytes. In terms of processing, O-glycosylated. Expressed in abundance in selected adult tissues, namely liver, kidney, adrenal, pituitary and choroid plexus.

It localises to the secreted. Functionally, multifunctional protein that plays a critical role in regulating the availability of IGFs such as IGF1 and IGF2 to their receptors and thereby regulates IGF-mediated cellular processes including proliferation, differentiation, and apoptosis in a cell-type specific manner. Functions coordinately with receptor protein tyrosine phosphatase beta/PTPRB and the IGF1 receptor to regulate IGF1-mediated signaling by stimulating the phosphorylation of PTEN leading to its inactivation and AKT1 activation. Plays a positive role in cell migration via interaction with integrin alpha5/ITGA5 through an RGD motif. Additionally, interaction with ITGA5/ITGB1 enhances the adhesion of endothelial progenitor cells to endothelial cells. Upon mitochondrial damage, facilitates apoptosis with ITGA5 of podocytes, and then activates the phosphorylation of focal adhesion kinase (FAK)-mediated mitochondrial injury. This is Insulin-like growth factor-binding protein 2 (IGFBP2) from Ovis aries (Sheep).